The chain runs to 171 residues: ATP synthase subunit b 2 (171 aa).

The chain crosses the membrane as a helical span at residues 9 to 29 (APWHHPVFWVAVAFVLFFVLF).

The protein belongs to the ATPase B chain family. In terms of assembly, F-type ATPases have 2 components, F(1) - the catalytic core - and F(0) - the membrane proton channel. F(1) has five subunits: alpha(3), beta(3), gamma(1), delta(1), epsilon(1). F(0) has three main subunits: a(1), b(2) and c(10-14). The alpha and beta chains form an alternating ring which encloses part of the gamma chain. F(1) is attached to F(0) by a central stalk formed by the gamma and epsilon chains, while a peripheral stalk is formed by the delta and b chains.

Its subcellular location is the cell inner membrane. F(1)F(0) ATP synthase produces ATP from ADP in the presence of a proton or sodium gradient. F-type ATPases consist of two structural domains, F(1) containing the extramembraneous catalytic core and F(0) containing the membrane proton channel, linked together by a central stalk and a peripheral stalk. During catalysis, ATP synthesis in the catalytic domain of F(1) is coupled via a rotary mechanism of the central stalk subunits to proton translocation. Its function is as follows. Component of the F(0) channel, it forms part of the peripheral stalk, linking F(1) to F(0). The protein is ATP synthase subunit b 2 of Granulibacter bethesdensis (strain ATCC BAA-1260 / CGDNIH1).